A 535-amino-acid polypeptide reads, in one-letter code: Calcium-dependent protein kinase 1 (535 aa).

The tract at residues 1–34 (MGCNQSKSANDVRGNKVNNVNSKKKNNKREDIND) is disordered. G2 is lipidated: N-myristoyl glycine. A lipid anchor (S-palmitoyl cysteine) is attached at C3. Residues 57 to 324 (YFKVRKLGSG…AEEALNSRWI (268 aa)) enclose the Protein kinase domain. Residues 63–71 (LGSGAYGEV) and K86 contribute to the ATP site. S65 is subject to Phosphoserine. S117 is modified (phosphoserine). Residue D190 is the Proton acceptor of the active site. Residues S216 and S219 each carry the phosphoserine modification. T230 is modified (phosphothreonine). A Phosphoserine modification is found at S334. The J domain autoinhibitory motif signature appears at 345–352 (NMRKFEGS). Positions 345–363 (NMRKFEGSQKLAQAAILFI) are j domain. The J domain interacts with the EF-hand domains motif lies at 353 to 363 (QKLAQAAILFI). EF-hand domains lie at 371–406 (EERKELTDIFKKLDKNGDGQLDKKELIEGYNVLRNF), 415–450 (NVEEEVDNILKEVDFDKNGYIEYSEFISVCMDKQIL), 451–486 (FSEERLRRAFNLFDTDKSGKITKEELANVIIRGFYF), and 497–532 (VSEKTWNDVLGEADQNKDNMIDFDEFVSMMHKICDN). Residues D384, N386, D388, Q390, E395, D428, D430, N432, Y434, E439, D464, D466, S468, K470, E475, D510, N512, D514, M516, and E521 each contribute to the Ca(2+) site.

It belongs to the protein kinase superfamily. Ser/Thr protein kinase family. CDPK subfamily. Monomer. Mg(2+) is required as a cofactor. In terms of processing, myristoylated. Myristoylation and palmitoylation are required for the localization to the parasitophorous vacuole membrane. Palmitoylated. Palmitoylation increases in merozoites in response to low level of extracellular K(+) in the host blood. Myristoylation and palmitoylation are required for the localization to the parasitophorous vacuole membrane. Post-translationally, phosphorylation at Thr-230 may regulate CDPK1 kinase activity. Phosphorylation increases in response to an increase in intracellular Ca(2+) levels. Autophosphorylated in vitro. Autophosphorylation does not affect membrane localization in vitro.

Its subcellular location is the membrane. The protein resides in the cell membrane. The protein localises to the parasitophorous vacuole membrane. It is found in the cytoplasm. It localises to the cell projection. Its subcellular location is the cilium. The protein resides in the flagellum. The protein localises to the host cell membrane. It catalyses the reaction L-seryl-[protein] + ATP = O-phospho-L-seryl-[protein] + ADP + H(+). The enzyme catalyses L-threonyl-[protein] + ATP = O-phospho-L-threonyl-[protein] + ADP + H(+). With respect to regulation, activated by calcium. Upon calcium binding to the EF-hand domains, the C-terminus of the junction domain (J domain) undergoes a conformational change which results in the dissociation of the pseudo-substrate inhibitory motif from the catalytic domain. This, in turn may facilitate the autophosphorylation of the activation loop at Thr-230, which leads to the kinase activation. Functionally, calcium-dependent protein kinase which acts as a sensor and effector of intracellular Ca(2+) levels probably in part downstream of cGMP-activated PKG kinase. During the liver stage, involved in sporozoite motility and thus in sporozoite invasion of host hepatocytes, probably together with CDPK4 and CDPK5. In the mosquito midgut and during the last stage of male gamete exflagellation, may play a role in the rupture of the host erythrocyte membrane. In the mosquito midgut, required for the differentiation of the zygote into the ookinete by promoting the translational activation of a subset of repressed mRNAs; these mRNAs are kept repressed in the zygote by the DOZI- or CITH-containing mRNP complexes. Dispensable during the asexual blood stage. This is Calcium-dependent protein kinase 1 from Plasmodium yoelii yoelii.